An 844-amino-acid polypeptide reads, in one-letter code: Protein translocase subunit SecA (844 aa).

Residues Gln-87, 105-109 (GEGKT), and Asp-495 contribute to the ATP site. The span at 783-800 (QAPPEELKQEFKHKEEPK) shows a compositional bias: basic and acidic residues. The segment at 783-844 (QAPPEELKQE…GQKYKKCCGA (62 aa)) is disordered. Positions 802–811 (LNYSGAQKET) are enriched in polar residues. A compositionally biased stretch (basic and acidic residues) spans 816–826 (PERRGEPKVGR). Residues Cys-830, Cys-832, Cys-841, and Cys-842 each contribute to the Zn(2+) site.

It belongs to the SecA family. As to quaternary structure, monomer and homodimer. Part of the essential Sec protein translocation apparatus which comprises SecA, SecYEG and auxiliary proteins SecDF-YajC and YidC. It depends on Zn(2+) as a cofactor.

It is found in the cell inner membrane. Its subcellular location is the cytoplasm. The catalysed reaction is ATP + H2O + cellular proteinSide 1 = ADP + phosphate + cellular proteinSide 2.. Part of the Sec protein translocase complex. Interacts with the SecYEG preprotein conducting channel. Has a central role in coupling the hydrolysis of ATP to the transfer of proteins into and across the cell membrane, serving as an ATP-driven molecular motor driving the stepwise translocation of polypeptide chains across the membrane. This Nitratidesulfovibrio vulgaris (strain DSM 19637 / Miyazaki F) (Desulfovibrio vulgaris) protein is Protein translocase subunit SecA.